Consider the following 455-residue polypeptide: UDP-N-acetylmuramoylalanine--D-glutamate ligase (455 aa).

112–118 (GTNGKTT) contributes to the ATP binding site.

Belongs to the MurCDEF family.

The protein resides in the cytoplasm. The enzyme catalyses UDP-N-acetyl-alpha-D-muramoyl-L-alanine + D-glutamate + ATP = UDP-N-acetyl-alpha-D-muramoyl-L-alanyl-D-glutamate + ADP + phosphate + H(+). Its pathway is cell wall biogenesis; peptidoglycan biosynthesis. Functionally, cell wall formation. Catalyzes the addition of glutamate to the nucleotide precursor UDP-N-acetylmuramoyl-L-alanine (UMA). The protein is UDP-N-acetylmuramoylalanine--D-glutamate ligase of Trichormus variabilis (strain ATCC 29413 / PCC 7937) (Anabaena variabilis).